The following is a 124-amino-acid chain: Transcription initiation factor IIA subunit 2 (124 aa).

It belongs to the TFIIA subunit 2 family. As to quaternary structure, TFIIA is a heterodimer composed of the large TOA1 and the small TOA2 subunits.

Its subcellular location is the nucleus. TFIIA is a component of the transcription machinery of RNA polymerase II and plays an important role in transcriptional activation. TFIIA in a complex with tbp mediates transcriptional activity. The sequence is that of Transcription initiation factor IIA subunit 2 (TOA2) from Cryptococcus neoformans var. neoformans serotype D (strain JEC21 / ATCC MYA-565) (Filobasidiella neoformans).